The sequence spans 393 residues: MAQENAAFSPGSEEPPRRRGRQRYVEKDGRCNVQQGNVRETYRYLTDLFTTLVDLQWRLSLLFFVLAYALTWLFFGAIWWLIAYGRGDLEHLEDTAWTPCVNNLNGFVAAFLFSIETETTIGYGHRVITDQCPEGIVLLLLQAILGSMVNAFMVGCMFVKISQPNKRAATLVFSSHAVVSLRDGRLCLMFRVGDLRSSHIVEASIRAKLIRSRQTLEGEFIPLHQTDLSVGFDTGDDRLFLVSPLVISHEIDAASPFWEASRRALERDDFEIVVILEGMVEATGMTCQARSSYLVDEVLWGHRFTSVLTLEDGFYEVDYASFHETFEVPTPSCSARELAEAAARLDAHLYWSIPSRLDEKVEEEGAGEGAGAGDGADKEQNGCLPPPESESKV.

The tract at residues methionine 1–arginine 23 is disordered. Residues methionine 1–tryptophan 57 are Cytoplasmic-facing. The helical transmembrane segment at arginine 58–isoleucine 82 threads the bilayer. The Extracellular portion of the chain corresponds to alanine 83 to glycine 106. An intramembrane region (helical; Pore-forming) is located at residues phenylalanine 107 to glutamate 118. Positions threonine 119–histidine 125 form an intramembrane region, pore-forming. A Selectivity filter motif is present at residues threonine 120–histidine 125. At arginine 126–glutamate 134 the chain is on the extracellular side. A helical transmembrane segment spans residues glycine 135 to cysteine 156. At methionine 157–valine 393 the chain is on the cytoplasmic side. Residues lysine 360–valine 393 form a disordered region. Residues leucine 384 to valine 393 are compositionally biased toward pro residues. The PDZ-binding motif lies at glutamate 390 to valine 393.

Belongs to the inward rectifier-type potassium channel (TC 1.A.2.1) family. KCNJ9 subfamily. As to quaternary structure, associates with KCNJ3/GIRK1 to form a G-protein-activated heteromultimer pore-forming unit. Interacts (via PDZ-binding motif) with SNX27 (via PDZ domain); the interaction is required when endocytosed to prevent degradation in lysosomes and promote recycling to the plasma membrane.

It is found in the membrane. The catalysed reaction is K(+)(in) = K(+)(out). In terms of biological role, this receptor is controlled by G proteins. Inward rectifier potassium channels are characterized by a greater tendency to allow potassium to flow into the cell rather than out of it. Their voltage dependence is regulated by the concentration of extracellular potassium; as external potassium is raised, the voltage range of the channel opening shifts to more positive voltages. The inward rectification is mainly due to the blockage of outward current by internal magnesium. Unable to produce channel activity when expressed alone but forms a functional channel in association with KCNJ3/GIRK1. This chain is G protein-activated inward rectifier potassium channel 3 (Kcnj9), found in Rattus norvegicus (Rat).